Reading from the N-terminus, the 470-residue chain is MTPFMTEDFLLDTEFARRLYHDYAKDQPIFDYHCHLPPQQIAEDYRFKNLYDIWLKGDHYKWRAMRTNGVAERLCTGDASDREKFDAWAATVPHTIGNPLYHWTHLELRRPFGITGKLLSPSTADEIWNECNELLAQDNFSARGIMQQMNVKMVGTTDDPIDSLEHHAEIAKDGSFTIKVLPSWRPDKAFNIEQATFNDYMAKLGEVSDTDIRRFADLQTALTKRLDHFAAHGCKVSDHALDVVMFAEANEAELDSILARRLAGETLSEHEVAQFKTAVLVFLGAEYARRGWVQQYHIGALRNNNLRQFKLLGPDVGFDSINDRPMAEELSKLLSKQNEENLLPKTILYCLNPRDNEVLGTMSGNFQGEGMPGKMQFGSGWWFNDQKDGMERQMTQLAQLGLLSRFVGMLTDSRSFLSYTRHEYFRRILCQMIGRWVEAGEAPADINLLGEMVKNICFNNARDYFAIELN.

Belongs to the metallo-dependent hydrolases superfamily. Uronate isomerase family.

It catalyses the reaction D-glucuronate = D-fructuronate. The catalysed reaction is aldehydo-D-galacturonate = keto-D-tagaturonate. Its pathway is carbohydrate metabolism; pentose and glucuronate interconversion. In Escherichia coli O157:H7 (strain EC4115 / EHEC), this protein is Uronate isomerase.